Consider the following 374-residue polypeptide: Alanine racemase (374 aa).

Lysine 34 (proton acceptor; specific for D-alanine) is an active-site residue. The residue at position 34 (lysine 34) is an N6-(pyridoxal phosphate)lysine. Arginine 138 provides a ligand contact to substrate. Tyrosine 265 (proton acceptor; specific for L-alanine) is an active-site residue. Methionine 313 serves as a coordination point for substrate.

This sequence belongs to the alanine racemase family. Pyridoxal 5'-phosphate is required as a cofactor.

The catalysed reaction is L-alanine = D-alanine. It functions in the pathway amino-acid biosynthesis; D-alanine biosynthesis; D-alanine from L-alanine: step 1/1. In terms of biological role, catalyzes the interconversion of L-alanine and D-alanine. May also act on other amino acids. This Hahella chejuensis (strain KCTC 2396) protein is Alanine racemase (alr).